We begin with the raw amino-acid sequence, 245 residues long: MSGVGVGRLIGVGTGPGDPELLTVKAVKALGQADVLAYFAKAGRSGNGRAVVEGLLKPDLVELPLYYPVTTEIDKDDGAYKTQITDFYNASAEAVAAHLAAGRTVAVLSEGDPLFYGSYMHLHVRLANRFPVEVIPGITAMSGCWSLAGLPLVQGDDVLSVLPGTMAEAELGRRLADTEAAVIMKVGRNLPKIRRALAASGRLDQAVYVERGTMKNAAMTALAEKADDEAPYFSLVLVPGWKDRP.

Belongs to the precorrin methyltransferase family. As to quaternary structure, homodimer.

The catalysed reaction is precorrin-2 + S-adenosyl-L-methionine = precorrin-3A + S-adenosyl-L-homocysteine + H(+). The protein operates within cofactor biosynthesis; adenosylcobalamin biosynthesis; cob(II)yrinate a,c-diamide from precorrin-2 (aerobic route): step 1/10. Functionally, methylates precorrin-2 at the C-20 position to produce precorrin-3A. The polypeptide is Precorrin-2 C(20)-methyltransferase (cobI) (Sinorhizobium sp).